The sequence spans 169 residues: MIILCLTIFANIFKPGWTGANERTFLAVKPDGVQRRLVGEIIRRFERKGFKLVGMKLLQASEAQLRQHYWELREKPFYNGLVKYMSSGPIVAMVWQGLDVVKTARKMLGETNPADSLPGTIRGDYCVEVGRNVIHGSDSVESAAREISLWFEDHELFCYEECGQHWIYA.

Residues Lys-29, Arg-105, Thr-111, Arg-122, Val-129, and Asn-132 each contribute to the ADP site. The Pros-phosphohistidine intermediate role is filled by His-135.

It belongs to the NDK family. In terms of assembly, homohexamer. Requires Mg(2+) as cofactor.

It localises to the mitochondrion outer membrane. Its subcellular location is the cytoplasm. The protein localises to the cytoskeleton. It is found in the cilium basal body. It catalyses the reaction a 2'-deoxyribonucleoside 5'-diphosphate + ATP = a 2'-deoxyribonucleoside 5'-triphosphate + ADP. The catalysed reaction is a ribonucleoside 5'-diphosphate + ATP = a ribonucleoside 5'-triphosphate + ADP. Functionally, catalyzes the phosphorylation of ribonucleosides and deoxyribonucleoside diphosphates, other than ATP, into the corresponding triphosphates with ATP as the major phosphate donor. The ATP gamma phosphate is transferred to the nucleoside diphosphate beta phosphate via a ping-pong mechanism, using a phosphorylated active-site intermediate. Through the catalyzed exchange of gamma-phosphate between di- and triphosphonucleosides participates in regulation of intracellular nucleotide homeostasis. Required for ciliary function during renal development. Independently of its kinase activity, facilitates mitochondrial tethering prior to membrane fusion through its direct membrane-binding and hexamerization. Implicated in repair of both single- and double-stranded breaks in DNA, independently of its kinase activity. In Danio rerio (Zebrafish), this protein is Nucleoside diphosphate kinase 3.